Reading from the N-terminus, the 361-residue chain is Chorismate synthase (361 aa).

Arginine 48 provides a ligand contact to NADP(+). Residues 126-128 (RSS), glycine 269, 302-306 (KPVPS), and asparagine 328 contribute to the FMN site.

The protein belongs to the chorismate synthase family. As to quaternary structure, homotetramer. It depends on FMNH2 as a cofactor.

It carries out the reaction 5-O-(1-carboxyvinyl)-3-phosphoshikimate = chorismate + phosphate. The protein operates within metabolic intermediate biosynthesis; chorismate biosynthesis; chorismate from D-erythrose 4-phosphate and phosphoenolpyruvate: step 7/7. Its function is as follows. Catalyzes the anti-1,4-elimination of the C-3 phosphate and the C-6 proR hydrogen from 5-enolpyruvylshikimate-3-phosphate (EPSP) to yield chorismate, which is the branch point compound that serves as the starting substrate for the three terminal pathways of aromatic amino acid biosynthesis. This reaction introduces a second double bond into the aromatic ring system. The protein is Chorismate synthase of Treponema denticola (strain ATCC 35405 / DSM 14222 / CIP 103919 / JCM 8153 / KCTC 15104).